The chain runs to 412 residues: Aspartate aminotransferase, cytoplasmic (412 aa).

Ala2 bears the N-acetylalanine mark. Residues Gly38, Trp140, and Asn194 each contribute to the L-aspartate site. Residue Lys258 is modified to N6-(pyridoxal phosphate)lysine. Arg386 is an L-aspartate binding site.

Belongs to the class-I pyridoxal-phosphate-dependent aminotransferase family. In terms of assembly, homodimer. The cofactor is pyridoxal 5'-phosphate.

The protein localises to the cytoplasm. The catalysed reaction is L-aspartate + 2-oxoglutarate = oxaloacetate + L-glutamate. It catalyses the reaction L-cysteine + 2-oxoglutarate = 2-oxo-3-sulfanylpropanoate + L-glutamate. It carries out the reaction (2S)-2-aminobutanoate + 2-oxoglutarate = 2-oxobutanoate + L-glutamate. The enzyme catalyses 3-sulfino-L-alanine + 2-oxoglutarate = 3-sulfinopyruvate + L-glutamate. In terms of biological role, biosynthesis of L-glutamate from L-aspartate or L-cysteine. Important regulator of levels of glutamate, the major excitatory neurotransmitter of the vertebrate central nervous system. Acts as a scavenger of glutamate in brain neuroprotection. The aspartate aminotransferase activity is involved in hepatic glucose synthesis during development and in adipocyte glyceroneogenesis. Using L-cysteine as substrate, regulates levels of mercaptopyruvate, an important source of hydrogen sulfide. Mercaptopyruvate is converted into H(2)S via the action of 3-mercaptopyruvate sulfurtransferase (3MST). Hydrogen sulfide is an important synaptic modulator and neuroprotectant in the brain. This Gallus gallus (Chicken) protein is Aspartate aminotransferase, cytoplasmic.